The following is a 1565-amino-acid chain: Synemin (1565 aa).

A head region spans residues 1–10 (MLSWRLQTGP). The segment at 11–49 (EKAELQELNARLYDYVCRVRELERENLLLEEELRGRRGR) is coil 1A. The segment at 11 to 320 (EKAELQELNA…YRALLEGESN (310 aa)) is interaction with DMD and UTRN. The IF rod domain occupies 11 to 322 (EKAELQELNA…ALLEGESNPE (312 aa)). A linker 1 region spans residues 50–58 (EGLWAEGQA). Residues 59 to 163 (RCAEEARSLR…ELRARAASLT (105 aa)) are coil 1B. The tract at residues 164 to 186 (MHFRARATGPAAPPPRLREVHDS) is linker 12. A coil 2 region spans residues 187-300 (YALLVAESWR…LRDYQDLLQV (114 aa)). The interval 301–1565 (KTGLSLEVAT…EEEENDGHWF (1265 aa)) is tail. Positions 401-421 (SGYSSSATTQQENSYGKAVSS) are disordered. The span at 402-421 (GYSSSATTQQENSYGKAVSS) shows a compositional bias: polar residues. Serine 429 is modified (phosphoserine). Residues 472–609 (YRDRRDKVAA…VKDAGGGTGR (138 aa)) are disordered. Basic and acidic residues predominate over residues 498–577 (KKTEVKATRE…KEKSVREREV (80 aa)). Threonine 598 and threonine 651 each carry phosphothreonine. A phosphoserine mark is found at serine 653 and serine 777. Residues 1019-1040 (LSKDEASEMEKAVESVVRESLS) show a composition bias toward basic and acidic residues. A disordered region spans residues 1019-1060 (LSKDEASEMEKAVESVVRESLSRQRSPAPGSPDEEGGAEAPA). Phosphoserine is present on residues serine 1044, serine 1049, serine 1077, serine 1087, serine 1181, and serine 1184. The tract at residues 1080 to 1105 (SEVAGGASHSSGQRTPQGPVSATVEV) is disordered. Polar residues predominate over residues 1087 to 1105 (SHSSGQRTPQGPVSATVEV). The tract at residues 1152–1463 (VSAGGDLSQA…GPKETSFTFQ (312 aa)) is interaction with TLN1 and VCL. Disordered regions lie at residues 1198–1221 (EAWGSPEPGPAESSADMDGSGRHS) and 1332–1415 (QLGE…ETSE). The segment at 1244 to 1563 (GKVGDYFATE…DNEEEENDGH (320 aa)) is interaction with DMD and UTRN. The segment covering 1354 to 1379 (ATHSHTSGRQTVMTEKSTFQSVVSES) has biased composition (polar residues). At serine 1435 the chain carries Phosphoserine. Arginine 1487 bears the Omega-N-methylarginine mark. The interval 1505–1525 (FKASAGEGDQAHREQGKEQAM) is disordered. The span at 1513–1525 (DQAHREQGKEQAM) shows a compositional bias: basic and acidic residues.

It belongs to the intermediate filament family. In terms of assembly, interacts with GFAP and VIM. Isoform 1 interacts with TLN1 and VCL. Isoform 2 interacts with DES and DTNA. Isoform 1 and isoform 2 interact with DMD and UTRN. Isoform 2 is strongly detected in adult heart, fetal skeletal muscles and fetal heart. Isoform 1 is weakly detected in fetal heart and also in fetal skeletal muscle. Isoform 1 and isoform 2 are detected in adult bladder (at protein level). The mRNA is predominantly expressed in heart and muscle with some expression in brain which may be due to tissue-specific isoforms.

The protein localises to the cytoplasm. It is found in the cytoskeleton. The protein resides in the cell junction. It localises to the adherens junction. Its function is as follows. Type-VI intermediate filament (IF) which plays an important cytoskeletal role within the muscle cell cytoskeleton. It forms heteromeric IFs with desmin and/or vimentin, and via its interaction with cytoskeletal proteins alpha-dystrobrevin, dystrophin, talin-1, utrophin and vinculin, is able to link these heteromeric IFs to adherens-type junctions, such as to the costameres, neuromuscular junctions, and myotendinous junctions within striated muscle cells. This Homo sapiens (Human) protein is Synemin.